The following is a 164-amino-acid chain: Phosphatidyl-N-methylethanolamine N-methyltransferase (164 aa).

Residues 1-21 constitute an intramembrane region (helical); it reads MGLLAAIGVLLPFPFYWWLWT. The Lumenal segment spans residues 22–30; sequence NAQSWVNLC. A helical membrane pass occupies residues 31-52; the sequence is GRERDPSTVMARVSHVLKAAQL. Topologically, residues 53-69 are cytoplasmic; the sequence is LSLFSVASLSWPPPLYF. The helical transmembrane segment at 70-90 threads the bilayer; sequence WPLMAFGQFLNFRVYQLLGEA. An S-adenosyl-L-methionine-binding site is contributed by 74–76; it reads AFG. Residues 91 to 131 are Lumenal-facing; that stretch reads GTYYGVRFGKNIPWVTEFPFGVIRDPQYVGSIMSLLACLSW. Residues 132–151 form a helical membrane-spanning segment; the sequence is VPFQYILLWSLGYVFMMFLE. Over 152–164 the chain is Cytoplasmic; that stretch reads SKEDPNARAKSIS. 154-155 is an S-adenosyl-L-methionine binding site; that stretch reads ED.

It belongs to the class VI-like SAM-binding methyltransferase superfamily. PEMT/PEM2 methyltransferase family.

The protein localises to the endoplasmic reticulum membrane. The enzyme catalyses a 1,2-diacyl-sn-glycero-3-phospho-N-methylethanolamine + S-adenosyl-L-methionine = a 1,2-diacyl-sn-glycero-3-phospho-N,N-dimethylethanolamine + S-adenosyl-L-homocysteine + H(+). It catalyses the reaction a 1,2-diacyl-sn-glycero-3-phospho-N,N-dimethylethanolamine + S-adenosyl-L-methionine = a 1,2-diacyl-sn-glycero-3-phosphocholine + S-adenosyl-L-homocysteine + H(+). The protein operates within phospholipid metabolism; phosphatidylcholine biosynthesis. In terms of biological role, catalyzes the second two steps of the methylation pathway of phosphatidylcholine biosynthesis, the SAM-dependent methylation of phosphatidylmonomethylethanolamine (PMME) to phosphatidyldimethylethanolamine (PDME) and of PDME to phosphatidylcholine (PC). The sequence is that of Phosphatidyl-N-methylethanolamine N-methyltransferase (PLMT) from Arabidopsis thaliana (Mouse-ear cress).